Reading from the N-terminus, the 47-residue chain is Mu-theraphotoxin-An1a (47 aa).

3 cysteine pairs are disulfide-bonded: cysteine 4-cysteine 34, cysteine 8-cysteine 39, and cysteine 22-cysteine 44.

In terms of processing, contains 3 disulfide bonds. In terms of tissue distribution, expressed by the venom gland.

The protein resides in the secreted. Is toxic to insects. Reduces amplitude and frequency of spontaneous firing and inhibits voltage-gated sodium current (Nav) in the dorsal unpaired median (DUM) neurons of P.americana. The chain is Mu-theraphotoxin-An1a from Acanthoscurria natalensis (Tarantula spider).